Here is a 606-residue protein sequence, read N- to C-terminus: Probable potassium transport system protein Kup 2 (606 aa).

Transmembrane regions (helical) follow at residues 18–38 (GLVF…IMTL), 46–66 (VLGI…VEYA), 97–117 (VAFV…DGII), 140–160 (AQGV…IFQF), 169–189 (AFGP…IVSI), 204–224 (AVTF…EVIL), 247–267 (AWYF…AFIL), 286–306 (ILYI…SQAL), 339–359 (IYIG…MLIF), 368–388 (AYGL…TMIF), 395–415 (WKVP…TANF), and 418–438 (LPHG…IMII).

This sequence belongs to the HAK/KUP transporter (TC 2.A.72) family.

The protein localises to the cell inner membrane. The enzyme catalyses K(+)(in) + H(+)(in) = K(+)(out) + H(+)(out). Functionally, transport of potassium into the cell. Likely operates as a K(+):H(+) symporter. This chain is Probable potassium transport system protein Kup 2, found in Geobacter metallireducens (strain ATCC 53774 / DSM 7210 / GS-15).